The primary structure comprises 921 residues: MAPLALMGVVLLLGVPHCLGEATPTPSLPPPTANDSDASPEGCQGSYRCQPGVLLPVWEPEDPSLGDKVARAVVYFVAMVYMFLGVSIIADRFMASIEVITSKEKEITITKANGETSVGTVRIWNETVSNLTLMALGSSAPEILLTVIEVCGHNFQAGELGPGTIVGSAAFNMFVVIAVCVYVIPAGESRKIKHLRVFFVTASWSIFAYVWLYLILAVFSPGVVQVWEALLTLIFFPVCVVFAWMADKRLLFYKYVYKRYRTDPRSGIIIGAEGDPPKSIELDGTFVGTEVPGELGALGTGPAEARELDASRREVIQILKDLKQKHPDKDLEQLMGIAKYYALLHQQKSRAFYRIQATRLMTGAGNVLRRHAADAARRPGATDGAPDDEDDGASRIFFEPSLYHCLENCGSVLLSVACQGGEGNSTFYVDYRTEDGSAKAGSDYEYSEGTLVFKPGETQKDLRIGIIDDDIFEEDEHFFVRLLNLRVGDAQGMFEPDGGGRPKGRLVAPLLATVTILDDDHAGIFSFQDRLLHVSECMGTVDVRVVRSSGARGTVRLPYRTVDGTARGGGVHYEDACGELEFGDDETMKTLQVKIVDDEEYEKKDNFFIELGQPQWLKRGISALLLNQGNGDKKITAEQEEAQRIAEMGKPVLGENNRLEVIIEESYDFKNTVDKLIKKTNLALVIGTHSWREQFIEAVTVSAGDEEEDEDGPREERLPSCFDYVMHFLTVFWKVLFACVPPTEYCNGWACFGVCILVIGVLTALIGDLASHFGCTVGLKDSVNAVVFVALGTSIPDTFASKVAALQDQCADASIGNVTGSNAVNVFLGLGVAWSVAAVYWAVQGRPFEVRAGTLAFSVTLFTVFAFVCIAVLLYRRRPQIGGELGGPRGPKLATTALFLGLWFLYILFSSLEAYCHIRGF.

Residues 1-20 form the signal peptide; sequence MAPLALMGVVLLLGVPHCLG. A disordered region spans residues 23–42; sequence TPTPSLPPPTANDSDASPEG. A helical transmembrane segment spans residues 69-89; that stretch reads VARAVVYFVAMVYMFLGVSII. N-linked (GlcNAc...) asparagine glycans are attached at residues asparagine 125 and asparagine 130. The next 4 membrane-spanning stretches (helical) occupy residues 131-151, 165-185, 197-217, and 226-246; these read LTLM…IEVC, IVGS…YVIP, VFFV…LILA, and VWEA…AWMA. Positions 248–267 are putative calmodulin-binding region; it reads KRLLFYKYVYKRYRTDPRSG. A disordered region spans residues 371-391; that stretch reads HAADAARRPGATDGAPDDEDD. 2 consecutive Calx-beta domains span residues 389 to 482 and 512 to 611; these read EDDG…FVRL and ATVT…FIEL. Glutamate 407, aspartate 443, aspartate 468, aspartate 469, isoleucine 471, glutamate 473, glutamate 476, aspartate 518, aspartate 519, aspartate 520, glutamate 536, aspartate 598, glutamate 599, and glutamate 600 together coordinate Ca(2+). A Phosphoserine modification is found at serine 622. Glutamate 665 contacts Ca(2+). 6 consecutive transmembrane segments (helical) span residues 721–741, 749–769, 786–806, 823–843, 855–875, and 893–913; these read CFDY…ACVP, WACF…IGDL, VVFV…VAAL, AVNV…YWAV, LAFS…VLLY, and LATT…SSLE.

The protein belongs to the Ca(2+):cation antiporter (CaCA) (TC 2.A.19) family. SLC8 subfamily. As to expression, detected in kidney cortex, in distal convoluted tubules and connecting segments. Detected in brain and spinal cord (at protein level). Detected in brain, especially in hippocampus CA1, CA2 and CA3 fiels, dentate gyrus, cerebellum and brain cortex.

It localises to the cell membrane. The protein localises to the basolateral cell membrane. It carries out the reaction Ca(2+)(in) + 3 Na(+)(out) = Ca(2+)(out) + 3 Na(+)(in). Calcium transport is down-regulated by Na(+) and stimulated by Ca(2+). Functionally, mediates the electrogenic exchange of Ca(2+) against Na(+) ions across the cell membrane, and thereby contributes to the regulation of cytoplasmic Ca(2+) levels and Ca(2+)-dependent cellular processes. Contributes to cellular Ca(2+) homeostasis in excitable cells. Contributes to the rapid decrease of cytoplasmic Ca(2+) levels back to baseline after neuronal activation, and thereby contributes to modulate synaptic plasticity, learning and memory. Plays a role in regulating urinary Ca(2+) and Na(+) excretion. The polypeptide is Sodium/calcium exchanger 2 (Mus musculus (Mouse)).